The chain runs to 74 residues: Mitotic-spindle organizing protein 1 (74 aa).

It belongs to the MOZART1 family. As to quaternary structure, part of the gamma-tubulin complex.

It is found in the cytoplasm. It localises to the cytoskeleton. The protein localises to the microtubule organizing center. The protein resides in the spindle pole body. Required for gamma-tubulin complex recruitment to the microtubule organizing center (MTOC). This Emericella nidulans (strain FGSC A4 / ATCC 38163 / CBS 112.46 / NRRL 194 / M139) (Aspergillus nidulans) protein is Mitotic-spindle organizing protein 1.